Reading from the N-terminus, the 259-residue chain is BTB/POZ domain-containing protein KCTD4 (259 aa).

Positions 33–134 constitute a BTB domain; the sequence is TLMTLNVGGY…EVKSRWEKEQ (102 aa).

The chain is BTB/POZ domain-containing protein KCTD4 (Kctd4) from Mus musculus (Mouse).